A 138-amino-acid polypeptide reads, in one-letter code: Large ribosomal subunit protein uL16 (138 aa).

Belongs to the universal ribosomal protein uL16 family. In terms of assembly, part of the 50S ribosomal subunit.

In terms of biological role, binds 23S rRNA and is also seen to make contacts with the A and possibly P site tRNAs. This is Large ribosomal subunit protein uL16 from Neisseria gonorrhoeae (strain ATCC 700825 / FA 1090).